The following is a 497-amino-acid chain: Aspartyl/glutamyl-tRNA(Asn/Gln) amidotransferase subunit B (497 aa).

This sequence belongs to the GatB/GatE family. GatB subfamily. As to quaternary structure, heterotrimer of A, B and C subunits.

It carries out the reaction L-glutamyl-tRNA(Gln) + L-glutamine + ATP + H2O = L-glutaminyl-tRNA(Gln) + L-glutamate + ADP + phosphate + H(+). It catalyses the reaction L-aspartyl-tRNA(Asn) + L-glutamine + ATP + H2O = L-asparaginyl-tRNA(Asn) + L-glutamate + ADP + phosphate + 2 H(+). In terms of biological role, allows the formation of correctly charged Asn-tRNA(Asn) or Gln-tRNA(Gln) through the transamidation of misacylated Asp-tRNA(Asn) or Glu-tRNA(Gln) in organisms which lack either or both of asparaginyl-tRNA or glutaminyl-tRNA synthetases. The reaction takes place in the presence of glutamine and ATP through an activated phospho-Asp-tRNA(Asn) or phospho-Glu-tRNA(Gln). The chain is Aspartyl/glutamyl-tRNA(Asn/Gln) amidotransferase subunit B from Cutibacterium acnes (strain DSM 16379 / KPA171202) (Propionibacterium acnes).